The primary structure comprises 225 residues: UPF0502 protein Ajs_3392 (225 aa).

This sequence belongs to the UPF0502 family.

The polypeptide is UPF0502 protein Ajs_3392 (Acidovorax sp. (strain JS42)).